The sequence spans 436 residues: UPF0597 protein YhaM (436 aa).

Belongs to the UPF0597 family.

This is UPF0597 protein YhaM from Escherichia coli O7:K1 (strain IAI39 / ExPEC).